Reading from the N-terminus, the 360-residue chain is MPNVTVALLFGGKSSEHEISIISAKAVSAHIDRTTYTLFPLYISRDGRWFKGRTARKVLDLDITGLLKSRTIETTNRQLLAMTENRDEDLFDFNFQKEGIEVAFPVLHGAYGEDGKIQGLLEVFAIPYTGCNVQSSSMTMDKEITKLCAVQAGIHVADYMTVLRPDYLNNRSAIAETIKKRFAPPFFVKPANLGSSVGIAKIHSFDELENALDEACRLDVKILVEKAIEGREVEVAVLGNEHPIASVPGEIEPGGDFYDFTDKYIDGSARLHIPARVDADTSARLQEEGIKAFRALGCSGMSRIDFFVEKGSGRIILNEINSIPGFTSISMYPMLMEHAGIGFTELIDRLVRFALEKTPA.

Residues 146–352 (KLCAVQAGIH…FTELIDRLVR (207 aa)) enclose the ATP-grasp domain. Residue 179–234 (KKRFAPPFFVKPANLGSSVGIAKIHSFDELENALDEACRLDVKILVEKAIEGREVE) coordinates ATP. 3 residues coordinate Mg(2+): D305, E319, and N321.

It belongs to the D-alanine--D-alanine ligase family. The cofactor is Mg(2+). It depends on Mn(2+) as a cofactor.

It is found in the cytoplasm. The enzyme catalyses 2 D-alanine + ATP = D-alanyl-D-alanine + ADP + phosphate + H(+). The protein operates within cell wall biogenesis; peptidoglycan biosynthesis. Its function is as follows. Cell wall formation. This chain is D-alanine--D-alanine ligase, found in Chlorobium phaeobacteroides (strain BS1).